Here is a 99-residue protein sequence, read N- to C-terminus: Aspartyl/glutamyl-tRNA(Asn/Gln) amidotransferase subunit C (99 aa).

Belongs to the GatC family. As to quaternary structure, heterotrimer of A, B and C subunits.

It catalyses the reaction L-glutamyl-tRNA(Gln) + L-glutamine + ATP + H2O = L-glutaminyl-tRNA(Gln) + L-glutamate + ADP + phosphate + H(+). The enzyme catalyses L-aspartyl-tRNA(Asn) + L-glutamine + ATP + H2O = L-asparaginyl-tRNA(Asn) + L-glutamate + ADP + phosphate + 2 H(+). Its function is as follows. Allows the formation of correctly charged Asn-tRNA(Asn) or Gln-tRNA(Gln) through the transamidation of misacylated Asp-tRNA(Asn) or Glu-tRNA(Gln) in organisms which lack either or both of asparaginyl-tRNA or glutaminyl-tRNA synthetases. The reaction takes place in the presence of glutamine and ATP through an activated phospho-Asp-tRNA(Asn) or phospho-Glu-tRNA(Gln). This Paraburkholderia xenovorans (strain LB400) protein is Aspartyl/glutamyl-tRNA(Asn/Gln) amidotransferase subunit C.